Reading from the N-terminus, the 446-residue chain is Probable carboxylesterase 16 (446 aa).

Residues 84–131 (PEPDSLRHKDNYNHQPRSDRRHSYGPNHNSPAPAERNESRRNSYGCNN) are disordered. Positions 87 to 105 (DSLRHKDNYNHQPRSDRRH) are enriched in basic and acidic residues. The Involved in the stabilization of the negatively charged intermediate by the formation of the oxyanion hole signature appears at 158–160 (HGG). Active-site residues include serine 274, aspartate 378, and histidine 408.

It belongs to the 'GDXG' lipolytic enzyme family. In terms of tissue distribution, expressed in roots, leaves, stems, flowers and siliques.

The catalysed reaction is a carboxylic ester + H2O = an alcohol + a carboxylate + H(+). Its function is as follows. Carboxylesterase acting on esters with varying acyl chain length. In Arabidopsis thaliana (Mouse-ear cress), this protein is Probable carboxylesterase 16 (CXE16).